The chain runs to 232 residues: GFP-like non-fluorescent chromoprotein FP595 (232 aa).

Residues 63 to 65 constitute a cross-link (2-iminomethyl-5-imidazolinone (Met-Gly)); that stretch reads MYG. Tyr64 is subject to (E)-2,3-didehydrotyrosine.

The protein belongs to the GFP family. Post-translationally, contains a chromophore consisting of modified amino acid residues. The chromophore is formed by autocatalytic backbone condensation between Xaa-N and Gly-(N+2), oxidation of Tyr-(N+1) to didehydrotyrosine, and formation of a double bond to the alpha-amino nitrogen of residue Tyr-(N+1). Maturation of the chromophore requires nothing other than molecular oxygen. As to expression, tentacle tips.

Its function is as follows. Pigment protein that is intensely purple in color. The sequence is that of GFP-like non-fluorescent chromoprotein FP595 from Anemonia sulcata (Mediterranean snakelocks sea anemone).